The primary structure comprises 75 residues: Small ribosomal subunit protein bS16 (75 aa).

The protein belongs to the bacterial ribosomal protein bS16 family.

The chain is Small ribosomal subunit protein bS16 from Campylobacter hominis (strain ATCC BAA-381 / DSM 21671 / CCUG 45161 / LMG 19568 / NCTC 13146 / CH001A).